A 1262-amino-acid chain; its full sequence is Histone-lysine N-methyltransferase eggless (1262 aa).

The segment at 1–194 (MSGQPTAVDC…MEVDQDVEES (194 aa)) is disordered. Composition is skewed to basic and acidic residues over residues 26 to 41 (ASREKSYGLPVRKGEN), 50 to 61 (AAKDVEIEELTH), and 81 to 99 (APDEPGKLADESEDRKGEN). The segment covering 157-166 (SSISSPTSES) has biased composition (low complexity). Residues 167–179 (FPEKDEKTNKENE) are compositionally biased toward basic and acidic residues. Serine 215 is modified (phosphoserine). The residue at position 217 (threonine 217) is a Phosphothreonine. Residues 353–420 (EKSDFSKNKL…LEKVQTTADK (68 aa)) adopt a coiled-coil conformation. Tudor domains lie at 529–602 (RLTI…SEKV) and 629–686 (QCTR…RETQ). The segment at 743 to 764 (SSAATPAGGRTNAGGVSTSNSA) is disordered. An MBD domain is found at 818–884 (LDSYSPLAKP…DNFDFTPDLK (67 aa)). Residues 946–1018 (LCCDCEDDCS…NCLNRVVQFS (73 aa)) form the Pre-SET domain. 9 residues coordinate Zn(2+): cysteine 948, cysteine 950, cysteine 954, cysteine 960, cysteine 962, cysteine 1000, cysteine 1004, cysteine 1006, and cysteine 1010. Residues 1021 to 1237 (MKLQVFKTSN…SGTELTWNYN (217 aa)) enclose the SET domain. S-adenosyl-L-methionine contacts are provided by residues 1031–1033 (RGW), aspartate 1069, and tyrosine 1071. Positions 1086 to 1097 (EGYESEVDHSDP) are enriched in basic and acidic residues. Positions 1086-1148 (EGYESEVDHS…QSSELDSQER (63 aa)) are disordered. Positions 1098–1113 (DAEEDNGGPDAEDDDD) are enriched in acidic residues. Low complexity predominate over residues 1129 to 1141 (RSGSTQNSSTQSS). S-adenosyl-L-methionine is bound by residues arginine 1191 and 1194–1195 (NH). Zn(2+)-binding residues include cysteine 1197, cysteine 1250, cysteine 1252, and cysteine 1257. Residues 1246-1262 (KVLYCQCGAPNCRLRLL) form the Post-SET domain.

This sequence belongs to the class V-like SAM-binding methyltransferase superfamily. Histone-lysine methyltransferase family. Suvar3-9 subfamily. Expressed in ovary (at protein level).

Its subcellular location is the nucleus. It localises to the chromosome. The catalysed reaction is L-lysyl(9)-[histone H3] + 3 S-adenosyl-L-methionine = N(6),N(6),N(6)-trimethyl-L-lysyl(9)-[histone H3] + 3 S-adenosyl-L-homocysteine + 3 H(+). Histone methyltransferase that specifically trimethylates 'Lys-10' of histone H3 (H3K9me3) in ovary. H3K9me3 represents a specific tag for epigenetic transcriptional repression by recruiting Su(var)205/HP1 to methylated histones. Plays a central role during oogenesis. This is Histone-lysine N-methyltransferase eggless (egg) from Drosophila melanogaster (Fruit fly).